A 459-amino-acid chain; its full sequence is Alcohol acyl transferase 1 allele GSd (459 aa).

Catalysis depends on proton acceptor residues His164 and Asn385.

It belongs to the plant acyltransferase family. In terms of tissue distribution, expressed at very low levels in the cortex and skin of ripe fruit.

Its function is as follows. Involved in the biosynthesis of volatile esters which confer ripe apple fruit flavor. Alcohol acyl transferase that can use a wide range of alcohols as substrate to produce esters. This Malus domestica (Apple) protein is Alcohol acyl transferase 1 allele GSd.